The following is a 280-amino-acid chain: Putative pyruvate, phosphate dikinase regulatory protein (280 aa).

ADP is bound at residue 152-159; it reads GVSRTSKS.

It belongs to the pyruvate, phosphate/water dikinase regulatory protein family. PDRP subfamily.

The catalysed reaction is N(tele)-phospho-L-histidyl/L-threonyl-[pyruvate, phosphate dikinase] + ADP = N(tele)-phospho-L-histidyl/O-phospho-L-threonyl-[pyruvate, phosphate dikinase] + AMP + H(+). The enzyme catalyses N(tele)-phospho-L-histidyl/O-phospho-L-threonyl-[pyruvate, phosphate dikinase] + phosphate + H(+) = N(tele)-phospho-L-histidyl/L-threonyl-[pyruvate, phosphate dikinase] + diphosphate. Its function is as follows. Bifunctional serine/threonine kinase and phosphorylase involved in the regulation of the pyruvate, phosphate dikinase (PPDK) by catalyzing its phosphorylation/dephosphorylation. This chain is Putative pyruvate, phosphate dikinase regulatory protein, found in Anaplasma phagocytophilum (strain HZ).